A 1274-amino-acid chain; its full sequence is DENN domain-containing protein 5B (1274 aa).

Position 2 is an N-acetylserine (Ser2). The 206-residue stretch at Asp39–Ser244 folds into the uDENN domain. Phosphoserine is present on residues Ser49 and Ser178. Residues Glu263 to Val399 form the cDENN domain. Positions Leu401–Glu581 constitute a dDENN domain. Positions Leu772–Thr932 constitute an RUN 1 domain. Phosphoserine is present on Ser822. Residues Leu916–Ile936 form a helical membrane-spanning segment. The PLAT domain maps to Ile936–Ile1044. The residue at position 1062 (Thr1062) is a Phosphothreonine. Phosphoserine occurs at positions 1068, 1076, and 1079. The RUN 2 domain maps to Thr1118 to Ser1267.

Belongs to the RAB6IP1 family.

It localises to the membrane. In terms of biological role, guanine nucleotide exchange factor (GEF) which may activate RAB39A and/or RAB39B. Promotes the exchange of GDP to GTP, converting inactive GDP-bound Rab proteins into their active GTP-bound form. In Mus musculus (Mouse), this protein is DENN domain-containing protein 5B (Dennd5b).